Reading from the N-terminus, the 239-residue chain is Transmembrane emp24 domain-containing protein 6 (239 aa).

The first 21 residues, 1-21, serve as a signal peptide directing secretion; it reads MFPLLLVAELVVLSLVTSVKS. The Lumenal portion of the chain corresponds to 22–200; sequence QETDPLHGSK…FFLLQSNYTY (179 aa). One can recognise a GOLD domain in the interval 53-138; the sequence is IECFWQFADQ…SIQVYLNFGV (86 aa). Asparagine 156 and asparagine 197 each carry an N-linked (GlcNAc...) asparagine glycan. The chain crosses the membrane as a helical span at residues 201–223; sequence VNWWSTAQSLAIVLSGALQLYFL. The Cytoplasmic portion of the chain corresponds to 224–239; the sequence is KRLFTASTTDTKKPRC.

Belongs to the EMP24/GP25L family.

It is found in the endoplasmic reticulum membrane. The protein is Transmembrane emp24 domain-containing protein 6 (Tmed6) of Mus musculus (Mouse).